A 357-amino-acid chain; its full sequence is 3-isopropylmalate dehydrogenase (357 aa).

76–89 (GPKWDDLPSEKRPE) is a binding site for NAD(+). Substrate contacts are provided by Arg96, Arg106, Arg135, and Asp224. Mg(2+)-binding residues include Asp224, Asp248, and Asp252. NAD(+) is bound at residue 282–294 (GSAPDIAGQDKAN).

It belongs to the isocitrate and isopropylmalate dehydrogenases family. LeuB type 1 subfamily. Homodimer. It depends on Mg(2+) as a cofactor. The cofactor is Mn(2+).

It localises to the cytoplasm. The enzyme catalyses (2R,3S)-3-isopropylmalate + NAD(+) = 4-methyl-2-oxopentanoate + CO2 + NADH. It participates in amino-acid biosynthesis; L-leucine biosynthesis; L-leucine from 3-methyl-2-oxobutanoate: step 3/4. Its function is as follows. Catalyzes the oxidation of 3-carboxy-2-hydroxy-4-methylpentanoate (3-isopropylmalate) to 3-carboxy-4-methyl-2-oxopentanoate. The product decarboxylates to 4-methyl-2 oxopentanoate. The polypeptide is 3-isopropylmalate dehydrogenase (Nitratidesulfovibrio vulgaris (strain ATCC 29579 / DSM 644 / CCUG 34227 / NCIMB 8303 / VKM B-1760 / Hildenborough) (Desulfovibrio vulgaris)).